Reading from the N-terminus, the 451-residue chain is uncharacterized protein (451 aa).

5 helical membrane passes run 11–31 (VLLK…YIDL), 56–76 (IQIY…SIGT), 151–171 (IIGI…NIYL), 175–195 (FWLI…LIIF), and 207–227 (VYSV…TIKI). The disordered stretch occupies residues 250 to 300 (TKSNNNNNNNNNNKQDDNIIYDTDSSFNGQSSSSSSSSSSSSSSSSSATTT). Composition is skewed to low complexity over residues 253-262 (NNNNNNNNNN) and 280-300 (SSSS…ATTT). 2 helical membrane passes run 392 to 412 (FVGV…SDYS) and 413 to 433 (LLTI…LTYL).

The protein localises to the membrane. This is an uncharacterized protein from Dictyostelium discoideum (Social amoeba).